The following is a 342-amino-acid chain: Autoinducer 2 import system permease protein LsrC (342 aa).

Over 1 to 13 (MLKFIQNNREITA) the chain is Periplasmic. The helical transmembrane segment at 14-34 (LLAVLLLFVLPGFLDRQYLSV) threads the bilayer. The Cytoplasmic portion of the chain corresponds to 35 to 38 (QTLT). The helical transmembrane segment at 39 to 59 (MVYSSAQILILLAMGATLVML) threads the bilayer. The Periplasmic portion of the chain corresponds to 60–69 (TRNIDVSVGS). A helical transmembrane segment spans residues 70–90 (ITGMCAVLLGMLLNAGYSLPV). Over 91-92 (AC) the chain is Cytoplasmic. A helical membrane pass occupies residues 93-113 (VATLLLGLLAGFFNGVLVAWL). A topological domain (periplasmic) is located at residue K114. A helical transmembrane segment spans residues 115–135 (IPAIVATLGTLGLYRGIMLLW). Residues 136–154 (TGGKWIEGLPAELKQLSAP) are Cytoplasmic-facing. Residues 155 to 175 (LLLGVSAIGWLTIILVAFMAW) traverse the membrane as a helical segment. Residues 176 to 212 (LLAKTAFGRSFYATGDNLQGARQLGVRTEAIRIVAFS) are Periplasmic-facing. Residues 213–233 (LNGCMAALAGIVFASQIGFIP) traverse the membrane as a helical segment. Residues 234 to 251 (NQTGTGLEMKAIAACVLG) are Cytoplasmic-facing. The helical transmembrane segment at 252–272 (GISLLGGSGAIIGAVLGAWFL) threads the bilayer. Residues 273–283 (TQIDSVLVLLR) are Periplasmic-facing. Residues 284–304 (IPAWWNDFIAGLVLLAVLVFD) traverse the membrane as a helical segment. Residues 305–342 (GRLRCALELNLRRQKYARFMTPPPSVKPASSGKKREAA) lie on the Cytoplasmic side of the membrane.

Belongs to the binding-protein-dependent transport system permease family. AraH/RbsC subfamily. The complex is composed of two ATP-binding proteins (LsrA), two transmembrane proteins (LsrC and LsrD) and a solute-binding protein (LsrB).

The protein resides in the cell inner membrane. Its function is as follows. Part of the ABC transporter complex LsrABCD involved in autoinducer 2 (AI-2) import. Probably responsible for the translocation of the substrate across the membrane. This Escherichia coli O157:H7 protein is Autoinducer 2 import system permease protein LsrC (lsrC).